The chain runs to 474 residues: Myocyte-specific enhancer factor 2C (474 aa).

One can recognise an MADS-box domain in the interval 3–57 (RKKIQITRIMDERNRQVTFTKRKFGLMKKAYELSVLCDCEIALIIFNSTNKLFQY). At Lys4 the chain carries N6-acetyllysine. The mef2-type DNA-binding region spans 58 to 86 (ASTDMDKVLLKYTEYNEPHESRTNSDIVE). Ser59 carries the post-translational modification Phosphoserine; by CK2. The tract at residues 91–118 (KGLNGCDSPDPDADDSVGHSPESEDKYR) is disordered. Phosphoserine occurs at positions 98 and 106. Position 108 is a phosphothreonine (Gly108). Ser110 bears the Phosphoserine mark. N6-acetyllysine is present on residues Lys116 and Lys119. 2 positions are modified to phosphoserine: Ser222 and Ser228. Lys234 and Lys239 each carry N6-acetyllysine. Ser240 is subject to Phosphoserine. Lys252 and Lys264 each carry N6-acetyllysine. The interval 271–278 (SEDVDLLL) is beta domain. Residues Thr293 and Thr300 each carry the phosphothreonine; by MAPK14 modification. The transcription repressor stretch occupies residues 368-399 (ACTSTHLSQSSNLSLPSTQSLSIKSEPVSPPR). Over residues 375–390 (SQSSNLSLPSTQSLSI) the composition is skewed to polar residues. Residues 375-474 (SQSSNLSLPS…RMRLSEGWAT (100 aa)) form a disordered region. A Glycyl lysine isopeptide (Lys-Gly) (interchain with G-Cter in SUMO) cross-link involves residue Lys391. Ser396 bears the Phosphoserine; by CDK5 mark. Phosphoserine; by MAPK7 is present on Ser420. Over residues 420–433 (SPVDSLSSCSSSYD) the composition is skewed to low complexity. Residues 434-444 (GSDREDHRNEF) show a composition bias toward basic and acidic residues. A Phosphoserine modification is found at Ser446.

This sequence belongs to the MEF2 family. As to quaternary structure, forms a complex with class II HDACs in undifferentiating cells. On myogenic differentiation, HDACs are released into the cytoplasm allowing MEF2s to interact with other proteins for activation. Interacts with EP300 in differentiating cells; the interaction acetylates MEF2C leading to increased DNA binding and activation. Interacts with HDAC7 and CARM1. Interacts with HDAC4, HDAC7 AND HDAC9; the interaction with HDACs represses transcriptional activity. Interacts with LPIN1. Interacts with MYOCD. Interacts with AKAP13. Interacts with FOXK1; the interaction inhibits MEF2C transactivation activity. Interacts (via N-terminus) with HABP4; this interaction decreases DNA-binding activity of MEF2C in myocardial cells in response to mechanical stress. Interacts with JPH2; interaction specifically takes place with the Junctophilin-2 N-terminal fragment cleavage product of JPH2. Interacts (via MADS box) with SOX18. Interacts with PHF7; the interaction promotes MEF2C binding to its transcription targets. Post-translationally, phosphorylation on Ser-59 enhances DNA binding activity. Phosphorylation on Ser-396 is required for Lys-391 sumoylation and inhibits transcriptional activity. In terms of processing, acetylated by p300 on several sites in diffentiating myocytes. Acetylation on Lys-4 increases DNA binding and transactivation. Sumoylated on Lys-391 with SUMO2 but not by SUMO1 represses transcriptional activity. Post-translationally, proteolytically cleaved in cerebellar granule neurons, probably by caspase 7, following neurotoxicity. Preferentially cleaves the CDK5-mediated hyperphosphorylated form which leads to neuron apoptosis and transcriptional inactivation. Widely expressed though mainly restricted to skeletal and cardiac muscle, brain, neurons and lymphocytes. Beta domain-lacking isoforms are the most predominantly expressed in all tissues including skeletal and cardiac muscle and brain. Only brain expresses all isoforms. Expression occurs primarily in the internal granule cell layer of the olfactory bulb, cortex, thalamus, hippocampus and cerebellum. Low levels in the cerebellum and hindbrain. Expressed throughout the cortex, including the frontal and entorhinal cortex, dentate gyrus, and basolateral amygdala. Selectively expressed in B-cells but not in T-cells, and its expression increases as B-cells mature.

The protein localises to the nucleus. It is found in the cytoplasm. It localises to the sarcoplasm. Transcription activator which binds specifically to the MEF2 element present in the regulatory regions of many muscle-specific genes. Controls cardiac morphogenesis and myogenesis, and is also involved in vascular development. Enhances transcriptional activation mediated by SOX18. May also be involved in neurogenesis and in the development of cortical architecture. Isoforms that lack the repressor domain are more active than isoform 1. Plays an essential role in hippocampal-dependent learning and memory by suppressing the number of excitatory synapses and thus regulating basal and evoked synaptic transmission. Crucial for normal neuronal development, distribution, and electrical activity in the neocortex. Necessary for proper development of megakaryocytes and platelets and for bone marrow B-lymphopoiesis. Required for B-cell survival and proliferation in response to BCR stimulation, efficient IgG1 antibody responses to T-cell-dependent antigens and for normal induction of germinal center B-cells. This is Myocyte-specific enhancer factor 2C from Mus musculus (Mouse).